A 21-amino-acid chain; its full sequence is Fibrinogen beta chain (21 aa).

Acidic residues predominate over residues E1 to D11. A disordered region spans residues E1–R21. Position 6 is a sulfotyrosine (Y6).

In terms of assembly, heterohexamer; disulfide linked. Contains 2 sets of 3 non-identical chains (alpha, beta and gamma). The 2 heterotrimers are in head to head conformation with the N-termini in a small central domain. Post-translationally, conversion of fibrinogen to fibrin is triggered by thrombin, which cleaves fibrinopeptides A and B from alpha and beta chains, and thus exposes the N-terminal polymerization sites responsible for the formation of the soft clot.

The protein localises to the secreted. Functionally, cleaved by the protease thrombin to yield monomers which, together with fibrinogen alpha (FGA) and fibrinogen gamma (FGG), polymerize to form an insoluble fibrin matrix. Fibrin has a major function in hemostasis as one of the primary components of blood clots. In addition, functions during the early stages of wound repair to stabilize the lesion and guide cell migration during re-epithelialization. Was originally thought to be essential for platelet aggregation, based on in vitro studies using anticoagulated blood. However subsequent studies have shown that it is not absolutely required for thrombus formation in vivo. Enhances expression of SELP in activated platelets. Maternal fibrinogen is essential for successful pregnancy. Fibrin deposition is also associated with infection, where it protects against IFNG-mediated hemorrhage. May also facilitate the antibacterial immune response via both innate and T-cell mediated pathways. The polypeptide is Fibrinogen beta chain (FGB) (Bison bonasus (European bison)).